Here is a 431-residue protein sequence, read N- to C-terminus: Enolase (431 aa).

Gln-167 is a binding site for (2R)-2-phosphoglycerate. Glu-209 (proton donor) is an active-site residue. Mg(2+) is bound by residues Asp-246, Glu-289, and Asp-316. Residues Lys-341, Arg-370, Ser-371, and Lys-392 each coordinate (2R)-2-phosphoglycerate. Lys-341 serves as the catalytic Proton acceptor.

It belongs to the enolase family. As to quaternary structure, component of the RNA degradosome, a multiprotein complex involved in RNA processing and mRNA degradation. The cofactor is Mg(2+).

Its subcellular location is the cytoplasm. The protein resides in the secreted. It is found in the cell surface. The catalysed reaction is (2R)-2-phosphoglycerate = phosphoenolpyruvate + H2O. Its pathway is carbohydrate degradation; glycolysis; pyruvate from D-glyceraldehyde 3-phosphate: step 4/5. Functionally, catalyzes the reversible conversion of 2-phosphoglycerate (2-PG) into phosphoenolpyruvate (PEP). It is essential for the degradation of carbohydrates via glycolysis. The protein is Enolase of Marinobacter nauticus (strain ATCC 700491 / DSM 11845 / VT8) (Marinobacter aquaeolei).